The sequence spans 110 residues: Nucleoid-associated protein Mvan_5528 (110 aa).

This sequence belongs to the YbaB/EbfC family. Homodimer.

Its subcellular location is the cytoplasm. It is found in the nucleoid. Functionally, binds to DNA and alters its conformation. May be involved in regulation of gene expression, nucleoid organization and DNA protection. This chain is Nucleoid-associated protein Mvan_5528, found in Mycolicibacterium vanbaalenii (strain DSM 7251 / JCM 13017 / BCRC 16820 / KCTC 9966 / NRRL B-24157 / PYR-1) (Mycobacterium vanbaalenii).